The following is a 734-amino-acid chain: Probable inactive histone-lysine N-methyltransferase SUVR1 (734 aa).

The disordered stretch occupies residues 61–163 (QSTEKNKKEE…LPPLKRYVRR (103 aa)). Residues 62-81 (STEKNKKEEEKKKKEEEKKS) are compositionally biased toward basic and acidic residues. The segment covering 98-109 (VQDEEDDMDEDE) has biased composition (acidic residues). Residues 113–122 (KRRLRSRRGR) are compositionally biased toward basic residues. Residues 123–132 (ASSSSSSSSS) show a composition bias toward low complexity. Residues Cys-460, Cys-464, Cys-468, Cys-477, Cys-545, Cys-549, Cys-551, and Cys-555 each coordinate Zn(2+). Residues 460 to 563 (CSTSCIEDCL…RCGNRVVQRG (104 aa)) enclose the Pre-SET domain. Positions 566–696 (NKLQVFFTPN…AMEELAWDYG (131 aa)) constitute an SET domain. Residues 577 to 579 (KGW) and 652 to 653 (NH) each bind S-adenosyl-L-methionine. Position 655 (Cys-655) interacts with Zn(2+). Tyr-695 serves as a coordination point for S-adenosyl-L-methionine. The region spanning 707–723 (KPFDCLCGSRFCRNKKR) is the Post-SET domain. Cys-711, Cys-713, and Cys-718 together coordinate Zn(2+).

The protein belongs to the class V-like SAM-binding methyltransferase superfamily. Histone-lysine methyltransferase family. As to quaternary structure, interacts with SUVR2 and itself.

It is found in the nucleus. It localises to the chromosome. Functionally, probable inactive histone-lysine methyltransferase that acts as regulator of transctiptional gene silencing independently of histone H3K9 methylation. Contributes to transcriptional gene silencing at RNA-directed DNA methylation (RdDM) target loci but also at RdDM-independent target loci. The protein is Probable inactive histone-lysine N-methyltransferase SUVR1 (SUVR1) of Arabidopsis thaliana (Mouse-ear cress).